Here is a 415-residue protein sequence, read N- to C-terminus: Gamma-glutamyl phosphate reductase (415 aa).

This sequence belongs to the gamma-glutamyl phosphate reductase family.

The protein localises to the cytoplasm. It catalyses the reaction L-glutamate 5-semialdehyde + phosphate + NADP(+) = L-glutamyl 5-phosphate + NADPH + H(+). The protein operates within amino-acid biosynthesis; L-proline biosynthesis; L-glutamate 5-semialdehyde from L-glutamate: step 2/2. Its function is as follows. Catalyzes the NADPH-dependent reduction of L-glutamate 5-phosphate into L-glutamate 5-semialdehyde and phosphate. The product spontaneously undergoes cyclization to form 1-pyrroline-5-carboxylate. The chain is Gamma-glutamyl phosphate reductase from Listeria monocytogenes serotype 4b (strain F2365).